The following is a 628-amino-acid chain: Serine/threonine-protein phosphatase 2A regulatory subunit psrA (628 aa).

Positions Met1–Lys22 are enriched in polar residues. Disordered stretches follow at residues Met1 to Phe61, Lys500 to Ser558, and Ser577 to Thr628. Low complexity-rich tracts occupy residues Asn23–Gln58 and Gln524–Asn547. A compositionally biased stretch (basic and acidic residues) spans Asn600–Arg618.

It belongs to the phosphatase 2A regulatory subunit B56 family. PP2A consists of a trimeric holoenzyme, composed of a 37 kDa catalytic subunit (C subunit) and a 65 kDa constant regulatory subunit (A subunit), that associates with a variety of regulatory subunits (B subunit) such as phr2AB (B55) and psrA (B56 homolog). The trimer may partially dissociates into a core 'AC' dimer equally active compared to the trimer. Seems to play a role in proper anterior patterning (pstO and pstAB).

It localises to the cytoplasm. The protein resides in the cytosol. Its function is as follows. Involved in developmental cell fate decision. The protein is Serine/threonine-protein phosphatase 2A regulatory subunit psrA (psrA) of Dictyostelium discoideum (Social amoeba).